The primary structure comprises 560 residues: Calnexin homolog (560 aa).

Residues 1–22 (MKYGKVSFLALLCSLYVRGSLA) form the signal peptide. At 23–489 (DPESEQEPLV…ETIIETPEIG (467 aa)) the chain is on the lumenal side. Cysteine 132 and cysteine 163 are oxidised to a cystine. Residues tyrosine 136, lysine 138, tyrosine 154, and aspartate 161 each contribute to the an alpha-D-glucoside site. Residues 242–375 (IYDPEDIKPA…RKIPNPDYFD (134 aa)) form a p domain (Extended arm) region. 5 repeat units span residues 244 to 255 (DPEDIKPADWVD), 261 to 272 (DPNAVKPDDWDE), 280 to 291 (DPDAVKPEDWLE), 299 to 310 (DPEAQKPEDWDD), and 314 to 324 (GDWIPSEIINP). 4 X approximate repeats stretches follow at residues 244 to 310 (DPED…DWDD) and 314 to 371 (GDWI…IPNP). The tract at residues 253–273 (WVDEPEIPDPNAVKPDDWDED) is disordered. Residues cysteine 326 and cysteine 332 are joined by a disulfide bond. Repeat copies occupy residues 333 to 343 (GEWKPPMIRNP), 347 to 357 (GPWSPPMIPNP), and 361 to 371 (GEWYPRKIPNP). Residue glutamate 391 coordinates an alpha-D-glucoside. A glycan (N-linked (GlcNAc...) asparagine) is linked at asparagine 418. The chain crosses the membrane as a helical span at residues 490–512 (IAIVAVLGSLTAVILTCYFYFFA). Residues 513–560 (SSSPASLSTGTTEAEKEQQEKFKQETETEKIDVSYAPETESPTAKNED) lie on the Cytoplasmic side of the membrane. Residues 517–560 (ASLSTGTTEAEKEQQEKFKQETETEKIDVSYAPETESPTAKNED) are disordered. Over residues 525–544 (EAEKEQQEKFKQETETEKID) the composition is skewed to basic and acidic residues. Residue threonine 551 is modified to Phosphothreonine. Serine 553 is subject to Phosphoserine. Phosphothreonine is present on threonine 555.

It belongs to the calreticulin family.

It is found in the endoplasmic reticulum membrane. In terms of biological role, calcium-binding protein that interacts with newly synthesized monoglucosylated glycoproteins in the endoplasmic reticulum. It may act in assisting protein assembly and/or in the retention within the ER of unassembled protein subunits. It seems to play a major role in the quality control apparatus of the ER by the retention of incorrectly folded proteins. In Schizosaccharomyces pombe (strain 972 / ATCC 24843) (Fission yeast), this protein is Calnexin homolog (cal1).